We begin with the raw amino-acid sequence, 732 residues long: Non-structural protein 4 (732 aa).

2 stretches are compositionally biased toward polar residues: residues 13-23 (KNKGIQQNQWH) and 31-56 (LSGQ…NSKS). 2 disordered regions span residues 13 to 74 (KNKG…NSAA) and 706 to 732 (LGRN…KQKE). Residues 719–732 (QVEEAENEEEKQKE) are compositionally biased toward acidic residues.

The sequence is that of Non-structural protein 4 from Catharanthus roseus (Madagascar periwinkle).